A 342-amino-acid chain; its full sequence is Protein RecA (342 aa).

This sequence belongs to the RecA family.

It is found in the cytoplasm. In terms of biological role, can catalyze the hydrolysis of ATP in the presence of single-stranded DNA, the ATP-dependent uptake of single-stranded DNA by duplex DNA, and the ATP-dependent hybridization of homologous single-stranded DNAs. It interacts with LexA causing its activation and leading to its autocatalytic cleavage. This Pectobacterium carotovorum (Erwinia carotovora) protein is Protein RecA.